The sequence spans 219 residues: Lipid transferase CIDEB (219 aa).

The CIDE-N domain occupies 33-110; the sequence is PRQRPFRVCD…VLELGQSWSP (78 aa).

Belongs to the CIDE family. In terms of assembly, interacts with DFFA. Interacts with DFFB; inhibited by DFFB. Interacts with APOB. Interacts with PREB/SEC12; facilitating loading of SCAP-SREBP into COPII vesicles.

It localises to the lipid droplet. Its subcellular location is the endoplasmic reticulum membrane. The protein resides in the golgi apparatus. The protein localises to the cytoplasmic vesicle. It is found in the COPI-coated vesicle. In terms of biological role, lipid transferase specifically expressed in hepatocytes, which promotes unilocular lipid droplet formation by mediating lipid droplet fusion. Lipid droplet fusion promotes their enlargement, restricting lipolysis and favoring lipid storage. Localizes on the lipid droplet surface, at focal contact sites between lipid droplets, and mediates atypical lipid droplet fusion by promoting directional net neutral lipid transfer from the smaller to larger lipid droplets. The transfer direction may be driven by the internal pressure difference between the contacting lipid droplet pair. Promotes lipid exchange and lipid droplet fusion in both small and large lipid droplet-containing hepatocytes. In addition to its role in lipid droplet fusion, also involved in cytoplasmic vesicle biogenesis and transport. Required for very-low-density lipoprotein (VLDL) lipidation and maturation. Probably involved in the biogenesis of VLDL transport vesicles by forming a COPII vesicle coat and facilitating the formation of endoplasmic reticulum-derived large vesicles. Also involved in sterol-regulated export of the SCAP-SREBP complex, composed of SCAP, SREBF1/SREBP1 and SREBF2/SREBP2, by promoting loading of SCAP-SREBP into COPII vesicles. May also activate apoptosis. The protein is Lipid transferase CIDEB (CIDEB) of Bos taurus (Bovine).